We begin with the raw amino-acid sequence, 2388 residues long: Hybrid signal transduction histidine kinase M (2388 aa).

Disordered stretches follow at residues 1–32 (MSNY…NNFN), 42–61 (FNTP…NSIS), 69–111 (NECN…STPI), 123–209 (NRSN…NAYP), 237–337 (TLLN…SPKL), 361–421 (SPHG…YNDN), 430–449 (TRNT…SSSF), and 486–542 (IYTP…NNNE). Residues 69-82 (NECNSGGEQSPKIK) are compositionally biased toward polar residues. Composition is skewed to low complexity over residues 83–110 (TNNN…KSTP), 125–206 (SNLN…SNSN), and 242–288 (SSNN…NNGG). Polar residues predominate over residues 293–306 (QFISSDNKYNTVGN). A compositionally biased stretch (basic residues) spans 309–322 (HHHHHHQLHNHRHS). Low complexity-rich tracts occupy residues 325–337 (QGSS…SPKL), 361–399 (SPHG…NQNN), 410–419 (NNSNDSFDYN), and 432–449 (NTGY…SSSF). Residues 489 to 505 (PPYPQPYPQPPQLPPPS) are compositionally biased toward pro residues. Residues 506 to 541 (SSSSLSKENDNVDNNNTNNNNNNNNNNNNNNNNNNN) are compositionally biased toward low complexity. A run of 4 helical transmembrane segments spans residues 550–570 (TMNL…FLMV), 589–609 (FILI…LLVV), 645–665 (YIFL…NLFF), and 679–699 (NIST…SHIP). The interval 732–888 (NNDNKNKIND…NNNEEDDEEE (157 aa)) is disordered. Residues 735-744 (NKNKINDKSD) are compositionally biased toward basic and acidic residues. The segment covering 745-880 (NSNSITNNNN…NNNNNNNNNN (136 aa)) has biased composition (low complexity). The next 3 membrane-spanning stretches (helical) occupy residues 896 to 916 (FQIF…LIVL), 953 to 973 (VQFQ…LLLV), and 1025 to 1045 (CSVG…WMSI). Residues 1093-1499 (RLVQNTGSII…VFELQVPMKC (407 aa)) form the Histidine kinase domain. Basic residues predominate over residues 1236–1257 (PIHHHRHHHRHHHHHHHHHHHH). Residues 1236-1410 (PIHHHRHHHR…INNNINNNNN (175 aa)) form a disordered region. The segment covering 1260–1274 (DDDDYDDDNDDDNNT) has biased composition (acidic residues). Residues 1286-1315 (LSDKIKDNQDENLELKKSNNDKIIENKENQ) are compositionally biased toward basic and acidic residues. Low complexity predominate over residues 1316 to 1410 (ENNNNNNNNN…INNNINNNNN (95 aa)). The Response regulatory 1 domain occupies 1541 to 1656 (KILVIDDNPN…QLTVLSQLLP (116 aa)). Asp1592 is subject to 4-aspartylphosphate. Disordered regions lie at residues 1666 to 1702 (SNQN…NIDF), 1960 to 2022 (GNNS…NSSN), 2036 to 2121 (CKGD…DIIN), 2133 to 2183 (QQQL…VKSS), and 2218 to 2256 (NQLN…NNND). Residues 1676 to 1696 (SNGGGGGGGGGGGGGGGGGSG) show a composition bias toward gly residues. Low complexity predominate over residues 1974-1985 (TNNNTTTTTTTT). Positions 1986-2010 (QPKKSPILTSSNGSDKSEGSTGSNR) are enriched in polar residues. The segment covering 2054–2064 (DSSSSSSSSDS) has biased composition (low complexity). The span at 2065–2076 (HGQDDHSYRLED) shows a compositional bias: basic and acidic residues. Composition is skewed to low complexity over residues 2078 to 2109 (SISS…SGIN) and 2133 to 2165 (QQQL…LPIP). Polar residues predominate over residues 2169-2183 (INSSGASSGIKVKSS). Residues 2262 to 2383 (NILLVEDNLV…LLISLLKKLV (122 aa)) enclose the Response regulatory 2 domain. At Asp2313 the chain carries 4-aspartylphosphate.

Activation probably requires transfer of a phosphate group between a histidine in the kinase core (transmitter) domain and an aspartate of the receiver domain.

It is found in the membrane. It catalyses the reaction ATP + protein L-histidine = ADP + protein N-phospho-L-histidine.. Its function is as follows. Acts as a receptor histidine kinase for a signal transduction pathway. This protein undergoes an ATP-dependent autophosphorylation at a conserved histidine residue in the kinase core, and a phosphoryl group is then transferred to a conserved aspartate residue in the receiver domain. The protein is Hybrid signal transduction histidine kinase M (dhkM) of Dictyostelium discoideum (Social amoeba).